A 104-amino-acid polypeptide reads, in one-letter code: Ig kappa chain V region XP-1 (104 aa).

A framework-1 region spans residues 1-24 (ADIVMTQTPASVSEPVGGTVTIKC). Residues 25-35 (QASQSIFBBLA) are complementarity-determining-1. Residues 36–49 (WYQKPGZPPKGLLY) form a framework-2 region. Residues 50 to 56 (TBYTLAS) are complementarity-determining-2. Residues 57-88 (GVSSRFSGGGSGTBFTLTISDLECABAATYYC) form a framework-3 region. The segment at 89-100 (EXTGVSZBXBKG) is complementarity-determining-3. Residues 101–104 (FGGG) form a framework-4 region.

The protein is Ig kappa chain V region XP-1 of Oryctolagus cuniculus (Rabbit).